Reading from the N-terminus, the 89-residue chain is CRISPR-associated endoribonuclease Cas2 2 (89 aa).

Residue aspartate 9 participates in Mg(2+) binding.

The protein belongs to the CRISPR-associated endoribonuclease Cas2 protein family. As to quaternary structure, homodimer, forms a heterotetramer with a Cas1 homodimer. It depends on Mg(2+) as a cofactor.

CRISPR (clustered regularly interspaced short palindromic repeat), is an adaptive immune system that provides protection against mobile genetic elements (viruses, transposable elements and conjugative plasmids). CRISPR clusters contain sequences complementary to antecedent mobile elements and target invading nucleic acids. CRISPR clusters are transcribed and processed into CRISPR RNA (crRNA). Functions as a ssRNA-specific endoribonuclease. Involved in the integration of spacer DNA into the CRISPR cassette. This Methanospirillum hungatei JF-1 (strain ATCC 27890 / DSM 864 / NBRC 100397 / JF-1) protein is CRISPR-associated endoribonuclease Cas2 2.